Reading from the N-terminus, the 446-residue chain is Chromosomal replication initiator protein DnaA (446 aa).

A domain I, interacts with DnaA modulators region spans residues 1–72; that stretch reads MKNISDLWNQ…ADTIYDLTGE (72 aa). A domain II region spans residues 72 to 109; that stretch reads EELSIKFVIPQNQNEEDFMPKSPIKKMSKEEPADFPQN. The tract at residues 110 to 326 is domain III, AAA+ region; it reads MLNPKYTFDT…GALIRVVAYS (217 aa). Residues Gly-154, Gly-156, Lys-157, and Thr-158 each coordinate ATP. Residues 327–446 form a domain IV, binds dsDNA region; that stretch reads SLINKDINAD…QIKEIKEQLR (120 aa).

Belongs to the DnaA family. As to quaternary structure, oligomerizes as a right-handed, spiral filament on DNA at oriC.

The protein resides in the cytoplasm. Its function is as follows. Plays an essential role in the initiation and regulation of chromosomal replication. ATP-DnaA binds to the origin of replication (oriC) to initiate formation of the DNA replication initiation complex once per cell cycle. Binds the DnaA box (a 9 base pair repeat at the origin) and separates the double-stranded (ds)DNA. Forms a right-handed helical filament on oriC DNA; dsDNA binds to the exterior of the filament while single-stranded (ss)DNA is stabiized in the filament's interior. The ATP-DnaA-oriC complex binds and stabilizes one strand of the AT-rich DNA unwinding element (DUE), permitting loading of DNA polymerase. After initiation quickly degrades to an ADP-DnaA complex that is not apt for DNA replication. Binds acidic phospholipids. The sequence is that of Chromosomal replication initiator protein DnaA from Bacillus licheniformis (strain ATCC 14580 / DSM 13 / JCM 2505 / CCUG 7422 / NBRC 12200 / NCIMB 9375 / NCTC 10341 / NRRL NRS-1264 / Gibson 46).